A 1194-amino-acid polypeptide reads, in one-letter code: F-box only protein 38 (1194 aa).

The region spanning 30–75 is the F-box domain; sequence MNQLSHEVLCHIFRYLPLQDIMCMECLSRKLKEAVTLYLRVVRVVD. The segment at 59 to 119 is interaction with KLF7; it reads KLKEAVTLYL…LHPRYLERRR (61 aa). 3 short sequence motifs (nuclear export signal) span residues 194–201, 307–316, and 451–460; these read LHLVGVNV, LEVDLGYLII, and LLPSLEFISL. 4 disordered regions span residues 487 to 529, 577 to 776, 793 to 879, and 896 to 915; these read ALVS…FRPD, EEQA…DAES, RTGR…RARS, and KPCH…STSD. A compositionally biased stretch (low complexity) spans 493–510; that stretch reads NSNNDNDNNAPNNNANLH. The residue at position 592 (Thr-592) is a Phosphothreonine. Phosphoserine occurs at positions 599, 601, and 607. Over residues 599 to 609 the composition is skewed to acidic residues; that stretch reads SESDDEEDSLE. 2 stretches are compositionally biased toward basic and acidic residues: residues 622–631 and 683–701; these read RYSEREEKTG and IKAD…KSKD. Residues 705–728 show a composition bias toward low complexity; the sequence is SCSSSSSSTAASTAGNASSPSTAS. Ser-742 and Ser-746 each carry phosphoserine. Over residues 764 to 774 the composition is skewed to acidic residues; the sequence is EDSEAMEEGDA. Over residues 793–804 the composition is skewed to basic and acidic residues; the sequence is RTGRCSDEERPS. Residues 855–867 are compositionally biased toward polar residues; it reads SSQPESCDVQSNE. A compositionally biased stretch (basic residues) spans 896 to 906; the sequence is KPCHAMKRKRT. A Nuclear localization signal motif is present at residues 902-905; that stretch reads KRKR.

As to quaternary structure, part of the SCF (SKP1-CUL1-F-box) E3 ubiquitin-protein ligase complex SCF(FBXO38) composed of CUL1, SKP1, RBX1 and FBXO38. Interacts with KLF7. Interacts with PDCD1/PD-1. As to expression, expressed at high levels in embryo (developing brain, spinal cord, branchial arms and limbs). Widely expressed at low levels in adult tissues, with highest expression in testis. Expressed in postmeiotic spermatids.

The protein localises to the cytoplasm. It is found in the cytosol. It localises to the nucleus. Its pathway is protein modification; protein ubiquitination. Its function is as follows. Substrate recognition component of a SCF (SKP1-CUL1-F-box protein) E3 ubiquitin-protein ligase complex which mediates the ubiquitination and subsequent proteasomal degradation of PDCD1/PD-1, thereby regulating T-cells-mediated immunity. Required for anti-tumor activity of T-cells by promoting the degradation of PDCD1/PD-1; the PDCD1-mediated inhibitory pathway being exploited by tumors to attenuate anti-tumor immunity and facilitate tumor survival. May indirectly stimulate the activity of transcription factor KLF7, a regulator of neuronal differentiation, without promoting KLF7 ubiquitination. This chain is F-box only protein 38, found in Mus musculus (Mouse).